A 226-amino-acid polypeptide reads, in one-letter code: Probable endonuclease LCL3 (226 aa).

A helical transmembrane segment spans residues 15–32; it reads VFYTSILTGGILSSFYVY. One can recognise a TNase-like domain in the interval 53 to 212; the sequence is RTLFGRVTSV…RKKKIGMFQQ (160 aa). Residue Arg-103 is part of the active site. Residue Asp-108 coordinates Ca(2+). Catalysis depends on residues Glu-111 and Arg-151.

The protein belongs to the LCL3 family.

Its subcellular location is the mitochondrion. The protein resides in the membrane. This is Probable endonuclease LCL3 (LCL3) from Yarrowia lipolytica (strain CLIB 122 / E 150) (Yeast).